Here is a 369-residue protein sequence, read N- to C-terminus: Deoxyhypusine synthase (369 aa).

A Phosphoserine modification is found at serine 78. NAD(+) contacts are provided by residues 105 to 109 (SNLIS), 131 to 133 (TAG), glutamate 137, and aspartate 238. 136–137 (EE) lines the spermidine pocket. Aspartate 243 is a spermidine binding site. Residue glycine 283 participates in NAD(+) binding. Histidine 288 lines the spermidine pocket. 308–309 (TA) provides a ligand contact to NAD(+). Residues 314 to 316 (GSD) and 323 to 329 (EAVSWGK) each bind spermidine. Lysine 329 serves as the catalytic Nucleophile. Residue 342–343 (DA) participates in NAD(+) binding.

This sequence belongs to the deoxyhypusine synthase family. In terms of assembly, homotetramer formed by a dimer of dimers. The cofactor is NAD(+).

It carries out the reaction [eIF5A protein]-L-lysine + spermidine = [eIF5A protein]-deoxyhypusine + propane-1,3-diamine. Its pathway is protein modification; eIF5A hypusination. Its function is as follows. Catalyzes the NAD-dependent oxidative cleavage of spermidine and the subsequent transfer of the butylamine moiety of spermidine to the epsilon-amino group of a critical lysine residue of the eIF-5A precursor protein to form the intermediate deoxyhypusine residue. This is the first step of the post-translational modification of that lysine into an unusual amino acid residue named hypusine. Hypusination is unique to mature eIF-5A factor and is essential for its function. The sequence is that of Deoxyhypusine synthase (DHPS) from Homo sapiens (Human).